Here is a 364-residue protein sequence, read N- to C-terminus: Anthranilate phosphoribosyltransferase (364 aa).

5-phospho-alpha-D-ribose 1-diphosphate is bound by residues Gly101, 104 to 105 (GD), Thr109, 111 to 114 (NLST), 129 to 137 (KHGNRAASS), and Gly141. Anthranilate is bound at residue Gly101. Ser113 provides a ligand contact to Mg(2+). Asn132 is a binding site for anthranilate. Residue Arg187 participates in anthranilate binding. Residues Asp245 and Glu246 each contribute to the Mg(2+) site.

It belongs to the anthranilate phosphoribosyltransferase family. As to quaternary structure, homodimer. Mg(2+) serves as cofactor.

It carries out the reaction N-(5-phospho-beta-D-ribosyl)anthranilate + diphosphate = 5-phospho-alpha-D-ribose 1-diphosphate + anthranilate. The protein operates within amino-acid biosynthesis; L-tryptophan biosynthesis; L-tryptophan from chorismate: step 2/5. In terms of biological role, catalyzes the transfer of the phosphoribosyl group of 5-phosphorylribose-1-pyrophosphate (PRPP) to anthranilate to yield N-(5'-phosphoribosyl)-anthranilate (PRA). The sequence is that of Anthranilate phosphoribosyltransferase from Mycolicibacterium gilvum (strain PYR-GCK) (Mycobacterium gilvum (strain PYR-GCK)).